The chain runs to 131 residues: Small ribosomal subunit protein uS11 (131 aa).

This sequence belongs to the universal ribosomal protein uS11 family. In terms of assembly, part of the 30S ribosomal subunit. Interacts with proteins S7 and S18. Binds to IF-3.

In terms of biological role, located on the platform of the 30S subunit, it bridges several disparate RNA helices of the 16S rRNA. Forms part of the Shine-Dalgarno cleft in the 70S ribosome. This chain is Small ribosomal subunit protein uS11, found in Deinococcus radiodurans (strain ATCC 13939 / DSM 20539 / JCM 16871 / CCUG 27074 / LMG 4051 / NBRC 15346 / NCIMB 9279 / VKM B-1422 / R1).